The chain runs to 89 residues: Small ribosomal subunit protein uS15 (89 aa).

This sequence belongs to the universal ribosomal protein uS15 family. Part of the 30S ribosomal subunit. Forms a bridge to the 50S subunit in the 70S ribosome, contacting the 23S rRNA.

Its function is as follows. One of the primary rRNA binding proteins, it binds directly to 16S rRNA where it helps nucleate assembly of the platform of the 30S subunit by binding and bridging several RNA helices of the 16S rRNA. Functionally, forms an intersubunit bridge (bridge B4) with the 23S rRNA of the 50S subunit in the ribosome. The sequence is that of Small ribosomal subunit protein uS15 from Chloroflexus aurantiacus (strain ATCC 29366 / DSM 635 / J-10-fl).